Consider the following 141-residue polypeptide: Ly6/PLAUR domain-containing protein 1 (141 aa).

An N-terminal signal peptide occupies residues 1 to 20 (MWVLGIAATFCGLFWLPGLA). 6 cysteine pairs are disulfide-bonded: Cys-25–Cys-54, Cys-28–Cys-37, Cys-46–Cys-71, Cys-77–Cys-100, Cys-88–Cys-97, and Cys-101–Cys-106. In terms of domain architecture, UPAR/Ly6 spans 25–107 (CYQCEEFQLN…ISCCNTPLCN (83 aa)). Asn-45 carries N-linked (GlcNAc...) asparagine glycosylation. Residue Gly-115 is the site of GPI-anchor amidated glycine attachment. A propeptide spans 116 to 141 (SSASAIRPGLLTTLLFFHLALCLAHC) (removed in mature form).

In terms of assembly, interacts with CHRNA4 and nAChRs containing alpha-4:beta-2 (CHRNA4:CHRNB2) and alpha-7 (CHRNA7) subunits. Preferentially expressed in the nervous system. Expressed in embryonic and postnatal postmitotic central and peripheral neurons including subpopulations of motor neurons, sensory neurons, interneurons and neurons of the autonomous nervous system. Expressed around the growing nerves in the limb bud. Expressed at high levels in specific brain regions such as the prefrontal cortex, amygdala, hippocampus, mediodorsal thalamus, dentate gyrus and specific brainstem nuclei (at protein level).

Its subcellular location is the cell membrane. In terms of biological role, believed to act as a modulator of nicotinic acetylcholine receptors (nAChRs) activity. In vitro increases receptor desensitization and decreases affinity for ACh of alpha-4:beta-2-containing nAChRs. May play a role in the intracellular trafficking of alpha-4:beta-2 and alpha-7-containing nAChRs and may inhibit their expression at the cell surface. May be involved in the control of anxiety. The sequence is that of Ly6/PLAUR domain-containing protein 1 (Lypd1) from Mus musculus (Mouse).